Here is a 482-residue protein sequence, read N- to C-terminus: Anaerobic nitric oxide reductase flavorubredoxin (482 aa).

The tract at residues 30-210 is zinc metallo-hydrolase; it reads LRGSSYNSYL…PFSRLVTPKI (181 aa). Residues His79, Glu81, Asp83, His147, Asp166, and His227 each contribute to the Fe cation site. Residues 254–393 enclose the Flavodoxin-like domain; the sequence is ITIFYDTMSN…LCRQHGRDIA (140 aa). FMN contacts are provided by residues 260–264 and 342–369; these read TMSNN and AFGS…EMSL. The 52-residue stretch at 426-477 folds into the Rubredoxin-like domain; that stretch reads GPMMQCSVCQWVYDPAKGEPNQDVQPGTPWSEVPDNFLCPECSLGKDVFDVL. The Fe cation site is built by Cys431, Cys434, Cys464, and Cys467.

In the N-terminal section; belongs to the zinc metallo-hydrolase group 3 family. Homotetramer. Requires Fe cation as cofactor. It depends on FMN as a cofactor.

Its subcellular location is the cytoplasm. The protein operates within nitrogen metabolism; nitric oxide reduction. In terms of biological role, anaerobic nitric oxide reductase; uses NADH to detoxify nitric oxide (NO), protecting several 4Fe-4S NO-sensitive enzymes. Has at least 2 reductase partners, only one of which (NorW, flavorubredoxin reductase) has been identified. NO probably binds to the di-iron center; electrons enter from the NorW at rubredoxin and are transferred sequentially to the FMN center and the di-iron center. Also able to function as an aerobic oxygen reductase. The protein is Anaerobic nitric oxide reductase flavorubredoxin of Klebsiella pneumoniae subsp. pneumoniae (strain ATCC 700721 / MGH 78578).